The sequence spans 1024 residues: Multidrug resistance protein MdtC (1024 aa).

Transmembrane regions (helical) follow at residues valine 12–leucine 32, glutamate 333–leucine 353, leucine 360–cysteine 380, leucine 387–leucine 407, valine 431–leucine 451, phenylalanine 463–proline 483, tryptophan 528–proline 548, leucine 853–serine 873, valine 875–leucine 895, leucine 897–valine 917, proline 953–glycine 973, and isoleucine 984–valine 1004.

Belongs to the resistance-nodulation-cell division (RND) (TC 2.A.6) family. MdtC subfamily. Part of a tripartite efflux system composed of MdtA, MdtB and MdtC. MdtC forms a heteromultimer with MdtB.

It is found in the cell inner membrane. The protein is Multidrug resistance protein MdtC of Yersinia enterocolitica serotype O:8 / biotype 1B (strain NCTC 13174 / 8081).